The chain runs to 182 residues: Keratin, type II cytoskeletal 60 kDa, component III (182 aa).

The region spanning 1 to 63 (ERGELALKDA…KLLEGEECRL (63 aa)) is the IF rod domain. The tract at residues 1 to 63 (ERGELALKDA…KLLEGEECRL (63 aa)) is coil 2. The tract at residues 63 to 182 (LSGEGVGPVN…TSSSRKSFKS (120 aa)) is tail. The segment at 157–182 (FGSGGGSSSSVKFVSTTSSSRKSFKS) is disordered. Residues 164–182 (SSSVKFVSTTSSSRKSFKS) are compositionally biased toward low complexity.

Belongs to the intermediate filament family. In terms of assembly, heterotetramer of two type I and two type II keratins.

This Bos taurus (Bovine) protein is Keratin, type II cytoskeletal 60 kDa, component III.